We begin with the raw amino-acid sequence, 274 residues long: Penicillin-insensitive murein endopeptidase (274 aa).

Residues 1-19 form the signal peptide; it reads MKKTVIALLAWFVSSASLA. 3 cysteine pairs are disulfide-bonded: C44/C265, C187/C235, and C216/C223. Zn(2+) contacts are provided by H110, H113, D120, D147, H150, and H211. The interval 225–274 is disordered; that stretch reads DQPLPPPGDGCGAELQSWFEPPKPGTTKPEKKTPPPLPPSCQALLDEHVL.

This sequence belongs to the peptidase M74 family. Dimer. Zn(2+) serves as cofactor.

It is found in the periplasm. Functionally, murein endopeptidase that cleaves the D-alanyl-meso-2,6-diamino-pimelyl amide bond that connects peptidoglycan strands. Likely plays a role in the removal of murein from the sacculus. This Salmonella paratyphi C (strain RKS4594) protein is Penicillin-insensitive murein endopeptidase.